The primary structure comprises 224 residues: Inhibitor of apoptosis protein (224 aa).

Residues 29–92 form a BIR repeat; sequence VDARNKSFAI…GFWSRNCGFM (64 aa). The Zn(2+) site is built by Cys-62, Cys-65, His-82, and Cys-89. A C4-type zinc finger spans residues 189–207; sequence CMTCGIEQINKDENFCSAC.

The protein belongs to the asfivirus IAP family. In terms of assembly, interacts with subunit p17 of host CASP3.

The protein localises to the host cytoplasm. The protein resides in the virion. Prevents apoptosis of host cell by inhibiting caspase-3/CASP3 activation to promote the viral replication. Also induces the activation of host NF-kappaB. In Ornithodoros (relapsing fever ticks), this protein is Inhibitor of apoptosis protein.